We begin with the raw amino-acid sequence, 281 residues long: Mad-like protein 1 (281 aa).

The span at 71–80 (SCASNASTSS) shows a compositional bias: low complexity. The tract at residues 71–105 (SCASNASTSSQPYCSSPPARKSSKHSRTAHNELEK) is disordered. The segment at 95 to 108 (HSRTAHNELEKTRR) is basic motif. A bHLH domain is found at 95 to 147 (HSRTAHNELEKTRRANLRGCLETLKMLVPCVSDATRNTTLALLTRARDHIIEL). Residues 109-147 (ANLRGCLETLKMLVPCVSDATRNTTLALLTRARDHIIEL) are helix-loop-helix motif. Positions 144-185 (IIELQDSNAAQMKKLNDLRDEQDELVAELAQLQADEEVAQAT) form a coiled coil. The disordered stretch occupies residues 189–213 (CQTLSQSRPESRASSFTSTSSRDSP). Over residues 200–212 (RASSFTSTSSRDS) the composition is skewed to low complexity.

In terms of assembly, forms heterodimer with mxl-1 in the presence and absence of DNA. Post-translationally, ubiquitinated. Expressed in intestinal cells in adults. Expressed in D-type motor neuron cell bodies.

The protein resides in the nucleus. In terms of biological role, transcriptional regulator which binds to the E box motif 5'-CACGTG-3', when in a heterodimeric complex with mxl-1. Involved in the control of lifespan in response to dietary restriction, the decline in protein homeostasis associated with normal aging, germline signaling and may overlap with the insulin-like signaling pathway. Plays a role in autophagy. Involved in promoting infection by the microsporidian pathogen N.parisii, possibly together with transcription factors pha-4 and zip-10. In response to neuronal injury, mdl-1 is targeted by sdz-33 for ubiquitin-mediated degradation, probably thereby reducing levels of mdl-1-mxl-1 heterodimers, allowing free mxl-1 to form complexes with tdpt-1 and thus inhibiting tdpt-1-dependent sumoylation of ets-4. The polypeptide is Mad-like protein 1 (Caenorhabditis elegans).